The chain runs to 435 residues: NAD-specific glutamate dehydrogenase A (435 aa).

The interval 1–28 (MTMASKSDSTHDESGDEAADSTEPESAL) is disordered. Over residues 14-23 (SGDEAADSTE) the composition is skewed to acidic residues. Lys-126 is a catalytic residue.

This sequence belongs to the Glu/Leu/Phe/Val dehydrogenases family. Homohexamer. In terms of processing, the N-terminus is blocked.

The enzyme catalyses L-glutamate + NAD(+) + H2O = 2-oxoglutarate + NH4(+) + NADH + H(+). With respect to regulation, inhibited by ethanol, acetone, acetonitrile and 2-propanol (65 to 70% inhibition) and to a lesser extent by methanol and dimethyl formamide (26 and 49 % inhibition respectively). No effect of glycerol or DMSO. In Halobacterium salinarum (Halobacterium halobium), this protein is NAD-specific glutamate dehydrogenase A (gdhX).